The chain runs to 186 residues: Transcription factor FapR (186 aa).

Belongs to the FapR family.

Transcriptional factor involved in regulation of membrane lipid biosynthesis by repressing genes involved in fatty acid and phospholipid metabolism. In Staphylococcus epidermidis (strain ATCC 35984 / DSM 28319 / BCRC 17069 / CCUG 31568 / BM 3577 / RP62A), this protein is Transcription factor FapR.